The sequence spans 190 residues: Voltage-dependent calcium channel gamma-like subunit (190 aa).

4 consecutive transmembrane segments (helical) span residues Phe-25–Ile-45, Ala-96–Glu-116, Leu-131–Asn-151, and Leu-155–Asn-175.

The protein belongs to the PMP-22/EMP/MP20 family. CACNG subfamily. The L-type calcium channel is composed of five subunits: alpha-1, alpha-2/delta, beta and gamma.

The protein resides in the membrane. Thought to stabilize the calcium channel in an inactivated (closed) state. Modulates calcium current when coexpressed with CACNA1G. This Homo sapiens (Human) protein is Voltage-dependent calcium channel gamma-like subunit.